The sequence spans 358 residues: UDP-N-acetylglucosamine--N-acetylmuramyl-(pentapeptide) pyrophosphoryl-undecaprenol N-acetylglucosamine transferase (358 aa).

UDP-N-acetyl-alpha-D-glucosamine-binding positions include 11–13 (TAG), N125, R162, S196, and Q288.

This sequence belongs to the glycosyltransferase 28 family. MurG subfamily.

It is found in the cell membrane. It catalyses the reaction di-trans,octa-cis-undecaprenyl diphospho-N-acetyl-alpha-D-muramoyl-L-alanyl-D-glutamyl-meso-2,6-diaminopimeloyl-D-alanyl-D-alanine + UDP-N-acetyl-alpha-D-glucosamine = di-trans,octa-cis-undecaprenyl diphospho-[N-acetyl-alpha-D-glucosaminyl-(1-&gt;4)]-N-acetyl-alpha-D-muramoyl-L-alanyl-D-glutamyl-meso-2,6-diaminopimeloyl-D-alanyl-D-alanine + UDP + H(+). The protein operates within cell wall biogenesis; peptidoglycan biosynthesis. In terms of biological role, cell wall formation. Catalyzes the transfer of a GlcNAc subunit on undecaprenyl-pyrophosphoryl-MurNAc-pentapeptide (lipid intermediate I) to form undecaprenyl-pyrophosphoryl-MurNAc-(pentapeptide)GlcNAc (lipid intermediate II). This is UDP-N-acetylglucosamine--N-acetylmuramyl-(pentapeptide) pyrophosphoryl-undecaprenol N-acetylglucosamine transferase from Leifsonia xyli subsp. xyli (strain CTCB07).